We begin with the raw amino-acid sequence, 499 residues long: Probable malate:quinone oxidoreductase (499 aa).

Belongs to the MQO family. The cofactor is FAD.

It catalyses the reaction (S)-malate + a quinone = a quinol + oxaloacetate. It functions in the pathway carbohydrate metabolism; tricarboxylic acid cycle; oxaloacetate from (S)-malate (quinone route): step 1/1. This chain is Probable malate:quinone oxidoreductase, found in Exiguobacterium sp. (strain ATCC BAA-1283 / AT1b).